Here is a 494-residue protein sequence, read N- to C-terminus: NAD(P)H-quinone oxidoreductase subunit 2 B, chloroplastic (494 aa).

13 consecutive transmembrane segments (helical) span residues 6–26 (LLLFHGGSIFPECILILGLIL), 39–59 (TPWFYFISLTSLVMSITVLLF), 81–101 (IFRFLILLCSTLCIPLSVEYI), 106–126 (MAITEFLLFLLTAALGGMVLC), 131–151 (LVTIFVALECFSLCSYLLSGY), 166–186 (LLMGGASSSILVYGFSWLYGL), 211–231 (ILIALISIAVGIGFKLSLVPF), 277–297 (WHLLLEILAILSMILGNLIAI), 305–325 (MLAYSSMGQIGYIIIGIIAGD), 336–356 (YMLFYIFMNLGTFACIVLFGL), 377–397 (AFSLALCLLSLGGIPPLAGFF), 413–433 (LLVSIGPLMSVISIYYYLKII), and 468–488 (MIVCVTASTTLGIVMNPIIAI).

The protein belongs to the complex I subunit 2 family. NDH is composed of at least 16 different subunits, 5 of which are encoded in the nucleus.

The protein localises to the plastid. Its subcellular location is the chloroplast thylakoid membrane. It catalyses the reaction a plastoquinone + NADH + (n+1) H(+)(in) = a plastoquinol + NAD(+) + n H(+)(out). It carries out the reaction a plastoquinone + NADPH + (n+1) H(+)(in) = a plastoquinol + NADP(+) + n H(+)(out). Functionally, NDH shuttles electrons from NAD(P)H:plastoquinone, via FMN and iron-sulfur (Fe-S) centers, to quinones in the photosynthetic chain and possibly in a chloroplast respiratory chain. The immediate electron acceptor for the enzyme in this species is believed to be plastoquinone. Couples the redox reaction to proton translocation, and thus conserves the redox energy in a proton gradient. The protein is NAD(P)H-quinone oxidoreductase subunit 2 B, chloroplastic of Cycas taitungensis (Prince sago).